The primary structure comprises 188 residues: dCTP deaminase (188 aa).

DCTP contacts are provided by residues 111–116 (KSTYAR), 135–137 (VLE), Gln156, Tyr170, and Gln180. Glu137 serves as the catalytic Proton donor/acceptor.

The protein belongs to the dCTP deaminase family. Homotrimer.

It catalyses the reaction dCTP + H2O + H(+) = dUTP + NH4(+). The protein operates within pyrimidine metabolism; dUMP biosynthesis; dUMP from dCTP (dUTP route): step 1/2. Its function is as follows. Catalyzes the deamination of dCTP to dUTP. The chain is dCTP deaminase from Protochlamydia amoebophila (strain UWE25).